Consider the following 419-residue polypeptide: UDP-N-acetylglucosamine 1-carboxyvinyltransferase 2 (419 aa).

A phosphoenolpyruvate-binding site is contributed by 22 to 23; that stretch reads KN. Residue arginine 92 coordinates UDP-N-acetyl-alpha-D-glucosamine. Cysteine 116 serves as the catalytic Proton donor. Cysteine 116 carries the post-translational modification 2-(S-cysteinyl)pyruvic acid O-phosphothioketal. Residues 121–125, aspartate 306, and isoleucine 328 contribute to the UDP-N-acetyl-alpha-D-glucosamine site; that span reads RPIDL.

The protein belongs to the EPSP synthase family. MurA subfamily.

The protein resides in the cytoplasm. The catalysed reaction is phosphoenolpyruvate + UDP-N-acetyl-alpha-D-glucosamine = UDP-N-acetyl-3-O-(1-carboxyvinyl)-alpha-D-glucosamine + phosphate. It functions in the pathway cell wall biogenesis; peptidoglycan biosynthesis. In terms of biological role, cell wall formation. Adds enolpyruvyl to UDP-N-acetylglucosamine. The protein is UDP-N-acetylglucosamine 1-carboxyvinyltransferase 2 of Streptococcus pyogenes serotype M18 (strain MGAS8232).